The following is a 185-amino-acid chain: Ribosome-recycling factor (185 aa).

It belongs to the RRF family.

It localises to the cytoplasm. In terms of biological role, responsible for the release of ribosomes from messenger RNA at the termination of protein biosynthesis. May increase the efficiency of translation by recycling ribosomes from one round of translation to another. The polypeptide is Ribosome-recycling factor (Wolbachia pipientis subsp. Culex pipiens (strain wPip)).